A 273-amino-acid polypeptide reads, in one-letter code: MVVKVGVLKMGAIGTALLVEYLLDERADREDIEVRVVTSGAKMQPEEAVVAEKLKEFDPDVVIVVSPNAALPGPKAAREAFEGKPVIVISDAPAKKAKDELKEKGFGYILINADSMIGARREFLDPTEMALFNADVVKVLAATGAFRLVQEAIDKVIEDIKAGKQPELPQIVVTAEKAVEAGKFSNPYAKAKAMAAFYIAEKVADIDVKGCFIEKDPEKYIPLVASAHEMMRIAAILADQAREIEKSNDTVFRNPHAKDGKILGKTQLMAKPE.

Belongs to the MTD family.

The enzyme catalyses 5,10-methylenetetrahydromethanopterin + oxidized coenzyme F420-(gamma-L-Glu)(n) + 2 H(+) = 5,10-methenyl-5,6,7,8-tetrahydromethanopterin + reduced coenzyme F420-(gamma-L-Glu)(n). It functions in the pathway metabolic intermediate metabolism; lactate oxidation. Its function is as follows. Catalyzes the oxidation of methylene-H(4)MPT to methenyl-H(4)MPT(+). In Archaeoglobus fulgidus (strain ATCC 49558 / DSM 4304 / JCM 9628 / NBRC 100126 / VC-16), this protein is F420-dependent methylenetetrahydromethanopterin dehydrogenase (mtd).